The primary structure comprises 248 residues: Small ribosomal subunit protein eS6 (248 aa).

The tract at residues 213–248 is disordered; that stretch reads LLAQRKKESKAKREEAKRRRSASMRESKSSISSDKK. Residues 223–248 are compositionally biased toward basic and acidic residues; that stretch reads AKREEAKRRRSASMRESKSSISSDKK.

This sequence belongs to the eukaryotic ribosomal protein eS6 family. In terms of assembly, component of the small ribosomal subunit. Part of the small subunit (SSU) processome, composed of more than 70 proteins and the RNA chaperone small nucleolar RNA (snoRNA) U3. Ribosomal protein S6 is the major substrate of protein kinases in eukaryote ribosomes.

It localises to the cytoplasm. The protein resides in the nucleus. It is found in the nucleolus. Functionally, component of the 40S small ribosomal subunit. Plays an important role in controlling cell growth and proliferation through the selective translation of particular classes of mRNA. Part of the small subunit (SSU) processome, first precursor of the small eukaryotic ribosomal subunit. During the assembly of the SSU processome in the nucleolus, many ribosome biogenesis factors, an RNA chaperone and ribosomal proteins associate with the nascent pre-rRNA and work in concert to generate RNA folding, modifications, rearrangements and cleavage as well as targeted degradation of pre-ribosomal RNA by the RNA exosome. The chain is Small ribosomal subunit protein eS6 (RpS6) from Glossina morsitans morsitans (Savannah tsetse fly).